Here is a 119-residue protein sequence, read N- to C-terminus: uncharacterized protein (119 aa).

2 consecutive transmembrane segments (helical) span residues 61–80 (LISA…LLSV) and 87–103 (VVGV…VDII).

It localises to the membrane. This is an uncharacterized protein from Saccharomyces cerevisiae (strain ATCC 204508 / S288c) (Baker's yeast).